A 574-amino-acid polypeptide reads, in one-letter code: Arginine--tRNA ligase (574 aa).

The short motif at 126–136 is the 'HIGH' region element; sequence PNIAKRMHVGH.

This sequence belongs to the class-I aminoacyl-tRNA synthetase family. In terms of assembly, monomer.

It localises to the cytoplasm. The enzyme catalyses tRNA(Arg) + L-arginine + ATP = L-arginyl-tRNA(Arg) + AMP + diphosphate. The protein is Arginine--tRNA ligase of Chloroflexus aggregans (strain MD-66 / DSM 9485).